A 92-amino-acid chain; its full sequence is Acylphosphatase (92 aa).

Residues 5–92 (RWHLLVSGKV…QEFTDFRTTH (88 aa)) enclose the Acylphosphatase-like domain. Catalysis depends on residues arginine 20 and asparagine 38.

The protein belongs to the acylphosphatase family.

The enzyme catalyses an acyl phosphate + H2O = a carboxylate + phosphate + H(+). In Marinobacter nauticus (strain ATCC 700491 / DSM 11845 / VT8) (Marinobacter aquaeolei), this protein is Acylphosphatase (acyP).